The sequence spans 152 residues: SsrA-binding protein (152 aa).

The protein belongs to the SmpB family.

Its subcellular location is the cytoplasm. Functionally, required for rescue of stalled ribosomes mediated by trans-translation. Binds to transfer-messenger RNA (tmRNA), required for stable association of tmRNA with ribosomes. tmRNA and SmpB together mimic tRNA shape, replacing the anticodon stem-loop with SmpB. tmRNA is encoded by the ssrA gene; the 2 termini fold to resemble tRNA(Ala) and it encodes a 'tag peptide', a short internal open reading frame. During trans-translation Ala-aminoacylated tmRNA acts like a tRNA, entering the A-site of stalled ribosomes, displacing the stalled mRNA. The ribosome then switches to translate the ORF on the tmRNA; the nascent peptide is terminated with the 'tag peptide' encoded by the tmRNA and targeted for degradation. The ribosome is freed to recommence translation, which seems to be the essential function of trans-translation. In Rickettsia akari (strain Hartford), this protein is SsrA-binding protein.